The sequence spans 229 residues: Glycine betaine/carnitine/choline transport system permease protein OpuCD (229 aa).

Positions 22–202 constitute an ABC transmembrane type-1 domain; that stretch reads FYRHFLMSVY…LMAVIADLVM (181 aa). The next 5 membrane-spanning stretches (helical) occupy residues 27-47, 55-74, 78-100, 148-168, and 182-202; these read LMSV…GILI, GWVF…AMLA, LVMG…LPII, ALVI…GGLG, and AIIL…DLVM.

Belongs to the binding-protein-dependent transport system permease family. CysTW subfamily. The complex is composed of two ATP-binding proteins (OpuCA), two transmembrane proteins (OpuCB and OpuCD) and a solute-binding protein (OpuCC).

It is found in the cell membrane. Its function is as follows. Involved in a high affinity multicomponent binding-protein-dependent transport system for glycine betaine, carnitine and choline; probably responsible for the translocation of the substrate across the membrane. The protein is Glycine betaine/carnitine/choline transport system permease protein OpuCD (opuCD) of Bacillus subtilis (strain 168).